A 78-amino-acid polypeptide reads, in one-letter code: Apolipoprotein C-I (78 aa).

The N-terminal stretch at 1-26 (MRLILWLPVLVVVLLMVLEGPAPAQG) is a signal peptide.

This sequence belongs to the apolipoprotein C1 family.

It is found in the secreted. Functionally, inhibitor of lipoprotein binding to the low density lipoprotein (LDL) receptor, LDL receptor-related protein, and very low density lipoprotein (VLDL) receptor. Associates with high density lipoproteins (HDL) and the triacylglycerol-rich lipoproteins in the plasma and makes up about 10% of the protein of the VLDL and 2% of that of HDL. Appears to interfere directly with fatty acid uptake and is also the major plasma inhibitor of cholesteryl ester transfer protein (CETP). Binds free fatty acids and reduces their intracellular esterification. Modulates the interaction of APOE with beta-migrating VLDL and inhibits binding of beta-VLDL to the LDL receptor-related protein. The chain is Apolipoprotein C-I (APOC1) from Lynx pardinus (Iberian lynx).